Consider the following 166-residue polypeptide: Bud site selection protein 20 (166 aa).

The short motif at 7–16 (KRYKTKRRTR) is the Nuclear localization signal element. Residues 17 to 31 (DLDLIYNDLSTKESV) are nuclear export signal-like (NES-like). The segment at 49 to 73 (HYCIHCAKYMETAIALKTHLKGKVH) adopts a C2H2-type zinc-finger fold.

The protein belongs to the ZNF593/BUD20 C2H2-type zinc-finger protein family. Associates with pre-60S ribosomal particles; released from the pre-60S particle very early in the cytoplasm.

Its subcellular location is the nucleus. The protein resides in the cytoplasm. In terms of biological role, involved in pre-60S ribosomal particles maturation by promoting the nuclear export of the 60S ribosome. Involved in positioning the proximal bud pole signal. The sequence is that of Bud site selection protein 20 from Saccharomyces cerevisiae (strain ATCC 204508 / S288c) (Baker's yeast).